Here is a 396-residue protein sequence, read N- to C-terminus: Stearoyl-[acyl-carrier-protein] 9-desaturase 5, chloroplastic (396 aa).

A chloroplast-targeting transit peptide spans 1-29 (MAMAMDRIVFSPSSYVYRPCQARGSRSSR). Fe cation is bound by residues Glu-137, Glu-175, His-178, Glu-228, Glu-261, and His-264.

It belongs to the fatty acid desaturase type 2 family. As to quaternary structure, homodimer. The cofactor is Fe(2+). As to expression, ubiquitously expressed with a preference in leaves, flowers and stems.

Its subcellular location is the plastid. It localises to the chloroplast stroma. It carries out the reaction octadecanoyl-[ACP] + 2 reduced [2Fe-2S]-[ferredoxin] + O2 + 2 H(+) = (9Z)-octadecenoyl-[ACP] + 2 oxidized [2Fe-2S]-[ferredoxin] + 2 H2O. The protein operates within lipid metabolism; fatty acid metabolism. In terms of biological role, converts stearoyl-ACP to oleoyl-ACP by introduction of a cis double bond between carbons 9 and 10 of the acyl chain. The sequence is that of Stearoyl-[acyl-carrier-protein] 9-desaturase 5, chloroplastic (S-ACP-DES5) from Arabidopsis thaliana (Mouse-ear cress).